Consider the following 355-residue polypeptide: Dihydroorotate dehydrogenase (quinone) (355 aa).

FMN contacts are provided by residues 68 to 72 (AGFDK) and Thr92. Substrate is bound at residue Lys72. A substrate-binding site is contributed by 117 to 121 (NRMGF). FMN is bound by residues Asn154 and Asn190. Asn190 lines the substrate pocket. Ser193 acts as the Nucleophile in catalysis. Asn195 is a binding site for substrate. Lys232 and Thr260 together coordinate FMN. 261–262 (NT) provides a ligand contact to substrate. FMN contacts are provided by residues Gly286, Gly315, and 336–337 (YS).

Belongs to the dihydroorotate dehydrogenase family. Type 2 subfamily. Monomer. FMN is required as a cofactor.

The protein resides in the cell membrane. The catalysed reaction is (S)-dihydroorotate + a quinone = orotate + a quinol. The protein operates within pyrimidine metabolism; UMP biosynthesis via de novo pathway; orotate from (S)-dihydroorotate (quinone route): step 1/1. Its function is as follows. Catalyzes the conversion of dihydroorotate to orotate with quinone as electron acceptor. This chain is Dihydroorotate dehydrogenase (quinone), found in Nocardioides sp. (strain ATCC BAA-499 / JS614).